Here is a 302-residue protein sequence, read N- to C-terminus: N-acetylmuramic acid 6-phosphate etherase (302 aa).

An SIS domain is found at 58–221 (IFERFKKGGR…TTTLMIKLGK (164 aa)). The active-site Proton donor is Glu-86. Residue Glu-117 is part of the active site.

The protein belongs to the GCKR-like family. MurNAc-6-P etherase subfamily. As to quaternary structure, homodimer.

It carries out the reaction N-acetyl-D-muramate 6-phosphate + H2O = N-acetyl-D-glucosamine 6-phosphate + (R)-lactate. Its pathway is amino-sugar metabolism; N-acetylmuramate degradation. Functionally, specifically catalyzes the cleavage of the D-lactyl ether substituent of MurNAc 6-phosphate, producing GlcNAc 6-phosphate and D-lactate. This chain is N-acetylmuramic acid 6-phosphate etherase, found in Mycoplasma mycoides subsp. mycoides SC (strain CCUG 32753 / NCTC 10114 / PG1).